Here is a 59-residue protein sequence, read N- to C-terminus: MNFIESFDMDDEEKEKLLEKLASQQLRADYRKALGSEHKRRYMDMEIEKIFKKGKKDER.

This is an uncharacterized protein from Archaeoglobus fulgidus (strain ATCC 49558 / DSM 4304 / JCM 9628 / NBRC 100126 / VC-16).